The primary structure comprises 785 residues: Cadherin-7 (785 aa).

Residues 1-27 (MKLGKVELCRFLQLIALFLCFSGMNQA) form the signal peptide. Residues 28-47 (ELPRSRSKPYFQLGRSRTKR) constitute a propeptide that is removed on maturation. Topologically, residues 28-607 (ELPRSRSKPY…AYILPAGLST (580 aa)) are extracellular. 5 Cadherin domains span residues 49–153 (WVWN…EPKF), 154–262 (LDGP…PPRF), 263–377 (PRRS…PPVF), 378–482 (SSPL…APEF), and 482–599 (FAMD…AEAY). N-linked (GlcNAc...) asparagine glycosylation is found at asparagine 449 and asparagine 530. A helical transmembrane segment spans residues 608–628 (GALIAILACVLTLLVLILLIV). The Cytoplasmic segment spans residues 629–785 (TMKRRKKEPL…YGNGQESLYS (157 aa)).

The protein localises to the cell membrane. Cadherins are calcium-dependent cell adhesion proteins. They preferentially interact with themselves in a homophilic manner in connecting cells; cadherins may thus contribute to the sorting of heterogeneous cell types. The sequence is that of Cadherin-7 (Cdh7) from Rattus norvegicus (Rat).